A 441-amino-acid chain; its full sequence is Protein arginine methyltransferase NDUFAF7, mitochondrial (441 aa).

The transit peptide at 1-46 directs the protein to the mitochondrion; sequence MSVLLRSGLGPLCAVARAAIPFIWRGKYFSSGNEPAENPVTPMLRH.

The protein belongs to the NDUFAF7 family. In terms of assembly, interacts with NDUFS2.

Its subcellular location is the mitochondrion. The catalysed reaction is L-arginyl-[protein] + 2 S-adenosyl-L-methionine = N(omega),N(omega)'-dimethyl-L-arginyl-[protein] + 2 S-adenosyl-L-homocysteine + 2 H(+). Arginine methyltransferase involved in the assembly or stability of mitochondrial NADH:ubiquinone oxidoreductase complex (complex I). Acts by mediating symmetric dimethylation of 'Arg-118' of NDUFS2 after it assembles into the complex I, stabilizing the early intermediate complex. In Homo sapiens (Human), this protein is Protein arginine methyltransferase NDUFAF7, mitochondrial.